A 186-amino-acid polypeptide reads, in one-letter code: Ribosome-recycling factor (186 aa).

The protein belongs to the RRF family.

It is found in the cytoplasm. Functionally, responsible for the release of ribosomes from messenger RNA at the termination of protein biosynthesis. May increase the efficiency of translation by recycling ribosomes from one round of translation to another. The polypeptide is Ribosome-recycling factor (Prosthecochloris aestuarii (strain DSM 271 / SK 413)).